The chain runs to 396 residues: Tryptophan synthase beta chain (396 aa).

N6-(pyridoxal phosphate)lysine is present on lysine 88.

This sequence belongs to the TrpB family. Tetramer of two alpha and two beta chains. Pyridoxal 5'-phosphate serves as cofactor.

It catalyses the reaction (1S,2R)-1-C-(indol-3-yl)glycerol 3-phosphate + L-serine = D-glyceraldehyde 3-phosphate + L-tryptophan + H2O. The protein operates within amino-acid biosynthesis; L-tryptophan biosynthesis; L-tryptophan from chorismate: step 5/5. In terms of biological role, the beta subunit is responsible for the synthesis of L-tryptophan from indole and L-serine. The polypeptide is Tryptophan synthase beta chain (Shewanella putrefaciens (strain CN-32 / ATCC BAA-453)).